The sequence spans 725 residues: Sodium/hydrogen exchanger 7 (725 aa).

The disordered stretch occupies residues 1–20 (MEPGDAARPGSGRATGAPPP). At 1–21 (MEPGDAARPGSGRATGAPPPR) the chain is on the cytoplasmic side. Residues 22–42 (LLLLPLLLGWGLRVAAAASAS) traverse the membrane as a helical segment. Residues 43 to 70 (SSGAAAEDSSAMEELATEKEAEESHRQD) lie on the Lumenal side of the membrane. The chain crosses the membrane as a helical span at residues 71 to 91 (SVSLLTFILLLTLTILTIWLF). Topologically, residues 92–95 (KHRR) are cytoplasmic. The chain crosses the membrane as a helical span at residues 96 to 116 (VRFLHETGLAMIYGLIVGVIL). Residues 117 to 175 (RYGTPATSGRDKSLSCTQEDRAFSTLLVNVSGKFFEYTLKGEISPGKINSVEQNDMLRK) lie on the Lumenal side of the membrane. The N-linked (GlcNAc...) asparagine glycan is linked to Asn-145. The chain crosses the membrane as a helical span at residues 176 to 196 (VTFDPEVFFNILLPPIIFHAG). Over 197–210 (YSLKKRHFFRNLGS) the chain is Cytoplasmic. The chain crosses the membrane as a helical span at residues 211-231 (ILAYAFLGTAVSCFIIGNLMY). Residues 232–251 (GVVKLMKIMGQLSDKFYYTD) are Lumenal-facing. A helical membrane pass occupies residues 252-272 (CLFFGAIISATDPVTVLAIFN). Residues 273 to 277 (ELHAD) lie on the Cytoplasmic side of the membrane. Residues 278 to 298 (VDLYALLFGESVLNDAVAIVL) form a helical membrane-spanning segment. Residues 299 to 322 (SSSIVAYQPAGLNTHAFDAAAFFK) are Lumenal-facing. A helical membrane pass occupies residues 323–343 (SVGIFLGIFSGSFTMGAVTGV). At 344–349 (NANVTK) the chain is on the cytoplasmic side. Transmembrane regions (helical) follow at residues 350–370 (FTKLHCFPLLETALFFLMSWS) and 371–391 (TFLLAEACGFTGVVAVLFCGI). At 392–414 (TQAHYTYNNLSVESRSRTKQLFE) the chain is on the cytoplasmic side. A helical transmembrane segment spans residues 415–435 (VLHFLAENFIFSYMGLALFTF). Residues 436-442 (QKHVFSP) are Lumenal-facing. The chain crosses the membrane as a helical span at residues 443 to 463 (IFIIGAFVAIFLGRAAHIYPL). The Cytoplasmic segment spans residues 464-474 (SFFLNLGRRHK). The chain crosses the membrane as a helical span at residues 475–497 (IGWNFQHMMMFSGLRGAMAFALA). The Lumenal segment spans residues 498-513 (IRDTASYARQMMFTTT). Residues 514–534 (LLIVFFTVWIIGGGTTPMLSW) form a helical membrane-spanning segment. Required for trans-Golgi network localization stretches follow at residues 533-559 (SWLNIRVGVEEPSEEDQNEHHWQYFRV) and 563-568 (PDQDPP). Residues 535 to 725 (LNIRVGVEEP…RLVFPLEDNA (191 aa)) are Cytoplasmic-facing. Phosphoserine is present on Ser-545. Disordered stretches follow at residues 567–590 (PPPNNDSFQVLQGDGPDSARGNRT) and 669–714 (TVTA…SSRG). The segment covering 675–684 (SSSSHTASTS) has biased composition (low complexity). A compositionally biased stretch (basic and acidic residues) spans 687–704 (GSRRTKSSSEEVLERDLG).

Belongs to the monovalent cation:proton antiporter 1 (CPA1) transporter (TC 2.A.36) family. In terms of assembly, interacts with SCAMP1, SCAMP2 and SCAMP5; may participate in its shuttling from trans-Golgi network to recycling endosomes. Post-translationally, N-glycosylated. Ubiquitously expressed.

It is found in the golgi apparatus. The protein resides in the trans-Golgi network membrane. Its subcellular location is the recycling endosome membrane. The protein localises to the cell membrane. The catalysed reaction is Na(+)(in) + H(+)(out) = Na(+)(out) + H(+)(in). It catalyses the reaction K(+)(in) + H(+)(out) = K(+)(out) + H(+)(in). Inhibited by benzamil and quinine but not by amiloride. In terms of biological role, golgi Na(+), K(+)/(H+) antiporter. Mediates the electoneutral influx of Na(+) or K(+) in exchange for H(+). May contribute to the regulation of Golgi apparatus volume and pH. The protein is Sodium/hydrogen exchanger 7 (SLC9A7) of Homo sapiens (Human).